The following is a 137-amino-acid chain: Nucleoside diphosphate kinase (137 aa).

Residues Lys9, Phe57, Arg85, Thr91, Arg102, and Asn112 each contribute to the ATP site. Residue His115 is the Pros-phosphohistidine intermediate of the active site.

Belongs to the NDK family. As to quaternary structure, homotetramer. Mg(2+) serves as cofactor.

The protein localises to the cytoplasm. The catalysed reaction is a 2'-deoxyribonucleoside 5'-diphosphate + ATP = a 2'-deoxyribonucleoside 5'-triphosphate + ADP. It catalyses the reaction a ribonucleoside 5'-diphosphate + ATP = a ribonucleoside 5'-triphosphate + ADP. Major role in the synthesis of nucleoside triphosphates other than ATP. The ATP gamma phosphate is transferred to the NDP beta phosphate via a ping-pong mechanism, using a phosphorylated active-site intermediate. This Aliarcobacter butzleri (strain RM4018) (Arcobacter butzleri) protein is Nucleoside diphosphate kinase.